Reading from the N-terminus, the 284-residue chain is MEMO1 family protein M1425_2054 (284 aa).

The protein belongs to the MEMO1 family.

In Saccharolobus islandicus (strain M.14.25 / Kamchatka #1) (Sulfolobus islandicus), this protein is MEMO1 family protein M1425_2054.